A 515-amino-acid chain; its full sequence is Maturase K (515 aa).

It belongs to the intron maturase 2 family. MatK subfamily.

It localises to the plastid. Its subcellular location is the chloroplast. Functionally, usually encoded in the trnK tRNA gene intron. Probably assists in splicing its own and other chloroplast group II introns. The chain is Maturase K from Pinus koraiensis (Korean pine).